The following is a 115-amino-acid chain: Large ribosomal subunit protein bL19 (115 aa).

Belongs to the bacterial ribosomal protein bL19 family.

This protein is located at the 30S-50S ribosomal subunit interface and may play a role in the structure and function of the aminoacyl-tRNA binding site. The protein is Large ribosomal subunit protein bL19 of Desulforamulus reducens (strain ATCC BAA-1160 / DSM 100696 / MI-1) (Desulfotomaculum reducens).